We begin with the raw amino-acid sequence, 210 residues long: Probable GTP-binding protein EngB (210 aa).

Residues T25–E199 form the EngB-type G domain. Residues G33–S40, G60–L64, D78–G81, T145–D148, and F178–S180 contribute to the GTP site. Positions 40 and 62 each coordinate Mg(2+).

Belongs to the TRAFAC class TrmE-Era-EngA-EngB-Septin-like GTPase superfamily. EngB GTPase family. It depends on Mg(2+) as a cofactor.

In terms of biological role, necessary for normal cell division and for the maintenance of normal septation. This is Probable GTP-binding protein EngB from Escherichia coli O6:H1 (strain CFT073 / ATCC 700928 / UPEC).